The primary structure comprises 816 residues: Mitogen-activated protein kinase 7 (816 aa).

The segment at 1–26 is disordered; the sequence is MAEPLKEEDGEDGSAEPPGPVKAEPA. Ala-2 is modified (N-acetylalanine). The interval 2-77 is required for cytoplasmic targeting; that stretch reads AEPLKEEDGE…VVSSARRRLT (76 aa). Residues 55–347 form the Protein kinase domain; it reads YEIIETIGNG…AAAALRHPFL (293 aa). Residues 61–69 and Lys-84 each bind ATP; that span reads IGNGAYGVV. Positions 78 to 139 are required for binding to MAP2K5; that stretch reads GQQVAIKKIP…FKSVYVVLDL (62 aa). The tract at residues 140–406 is necessary for oligomerization; that stretch reads MESDLHQIIH…QQIRFQPSLQ (267 aa). The active-site Proton acceptor is Asp-182. Residues 219-221 carry the TXY motif; the sequence is TEY. The disordered stretch occupies residues 406–737; sequence QPVASEPGCP…PVFSGTPKGS (332 aa). Residues 407 to 806 form a may not be required for kinase activity; required to stimulate MEF2C activity region; that stretch reads PVASEPGCPD…REIQMDSPML (400 aa). 2 stretches are compositionally biased toward pro residues: residues 433–445 and 454–463; these read SPPPAPPPCPGPA and QPPPPVSEPA. Residues 476 to 486 show a composition bias toward low complexity; that stretch reads KAALKAALLKS. 3 stretches are compositionally biased toward basic and acidic residues: residues 502–519, 527–544, and 563–573; these read PEPRKPVTAQERQREREE, RAKEREKRRQERERKERG, and DNDRSLLERWT. The short motif at 505–539 is the Nuclear localization signal element; it reads RKPVTAQERQREREEKRRRRQERAKEREKRRQERE. Positions 578–587 are enriched in low complexity; sequence PAAPALTSVP. Composition is skewed to pro residues over residues 588 to 610 and 628 to 655; these read APAPAPTPTPTPVQPTSPPPGPV and VPQPACPPPGPAPHPTGPPGPIPVPAPP. The span at 676–685 shows a compositional bias: low complexity; sequence PGSSTPGVLP. A compositionally biased stretch (pro residues) spans 686 to 695; sequence YFPPGLPPPD. The segment covering 701–720 has biased composition (polar residues); it reads QSSMSESPDVNLVTQQLSKS. The residue at position 720 (Ser-720) is a Phosphoserine. Phosphothreonine is present on Thr-733.

Belongs to the protein kinase superfamily. CMGC Ser/Thr protein kinase family. MAP kinase subfamily. In terms of assembly, interacts with MAP2K5. Forms oligomers. Interacts with MEF2A, MEF2C and MEF2D; the interaction phosphorylates the MEF2s and enhances transcriptional activity of MEF2A, MEF2C but not MEF2D. Interacts with SGK1. Preferentially interacts with PML isoform PML-4 but shows interaction also with its other isoforms: isoform PML-1, isoform PML-2, isoform PML-3 and isoform PML-6. Interacts (via N-terminal half) with HSP90AB1-CDC37 chaperone complex in resting cells; the interaction is MAP2K5-independent and prevents MAPK7 from ubiquitination and proteasomal degradation. Interacts with STUB1/CHIP; the interaction is enhanced in the presence of IGF1 or MAP2K5 and promotes STUB1/CHIP E3 ligase activity. Mg(2+) serves as cofactor. Dually phosphorylated on Thr-219 and Tyr-221, which activates the enzyme. Autophosphorylated in vitro on threonine and tyrosine residues when the C-terminal part of the kinase, which could have a regulatory role, is absent. Expressed in many adult tissues. Abundant in heart, placenta, lung, kidney and skeletal muscle. Not detectable in liver.

Its subcellular location is the cytoplasm. The protein resides in the nucleus. It is found in the PML body. It catalyses the reaction L-seryl-[protein] + ATP = O-phospho-L-seryl-[protein] + ADP + H(+). The enzyme catalyses L-threonyl-[protein] + ATP = O-phospho-L-threonyl-[protein] + ADP + H(+). Activated by tyrosine and threonine phosphorylation. Activated in response to hyperosmolarity, hydrogen peroxide, and epidermal growth factor (EGF). Its function is as follows. Plays a role in various cellular processes such as proliferation, differentiation and cell survival. The upstream activator of MAPK7 is the MAPK kinase MAP2K5. Upon activation, it translocates to the nucleus and phosphorylates various downstream targets including MEF2C. EGF activates MAPK7 through a Ras-independent and MAP2K5-dependent pathway. As part of the MAPK/ERK signaling pathway, acts as a negative regulator of apoptosis in cardiomyocytes via interaction with STUB1/CHIP and promotion of STUB1-mediated ubiquitination and degradation of ICER-type isoforms of CREM. May have a role in muscle cell differentiation. May be important for endothelial function and maintenance of blood vessel integrity. MAP2K5 and MAPK7 interact specifically with one another and not with MEK1/ERK1 or MEK2/ERK2 pathways. Phosphorylates SGK1 at Ser-78 and this is required for growth factor-induced cell cycle progression. Involved in the regulation of p53/TP53 by disrupting the PML-MDM2 interaction. The protein is Mitogen-activated protein kinase 7 (MAPK7) of Homo sapiens (Human).